Consider the following 172-residue polypeptide: Cell division protein SepF (172 aa).

The segment at 16-78 (DGDEHYEPQP…RAASNRDDSS (63 aa)) is disordered. The span at 17–48 (GDEHYEPQPEGKQTRPAQKNEEYVDQEIRHTE) shows a compositional bias: basic and acidic residues.

Belongs to the SepF family. As to quaternary structure, homodimer. Interacts with FtsZ.

The protein localises to the cytoplasm. Cell division protein that is part of the divisome complex and is recruited early to the Z-ring. Probably stimulates Z-ring formation, perhaps through the cross-linking of FtsZ protofilaments. Its function overlaps with FtsA. The sequence is that of Cell division protein SepF from Renibacterium salmoninarum (strain ATCC 33209 / DSM 20767 / JCM 11484 / NBRC 15589 / NCIMB 2235).